We begin with the raw amino-acid sequence, 137 residues long: Holo-[acyl-carrier-protein] synthase (137 aa).

The Mg(2+) site is built by Asp-8 and Glu-57.

It belongs to the P-Pant transferase superfamily. AcpS family. Mg(2+) is required as a cofactor.

The protein localises to the cytoplasm. It carries out the reaction apo-[ACP] + CoA = holo-[ACP] + adenosine 3',5'-bisphosphate + H(+). Its function is as follows. Transfers the 4'-phosphopantetheine moiety from coenzyme A to a Ser of acyl-carrier-protein. The sequence is that of Holo-[acyl-carrier-protein] synthase from Cereibacter sphaeroides (strain ATCC 17025 / ATH 2.4.3) (Rhodobacter sphaeroides).